Here is a 96-residue protein sequence, read N- to C-terminus: DNA/RNA-binding protein Alba (96 aa).

It belongs to the histone-like Alba family.

It localises to the cytoplasm. Its subcellular location is the chromosome. In terms of biological role, binds double-stranded DNA tightly but without sequence specificity. Involved in DNA compaction. This chain is DNA/RNA-binding protein Alba, found in Methanocella arvoryzae (strain DSM 22066 / NBRC 105507 / MRE50).